Consider the following 96-residue polypeptide: uncharacterized protein (96 aa).

It localises to the mitochondrion. This is an uncharacterized protein from Schizosaccharomyces pombe (strain 972 / ATCC 24843) (Fission yeast).